A 2284-amino-acid chain; its full sequence is RNA1 polyprotein (2284 aa).

Residues 567–1172 lie on the Cytoplasmic side of the membrane; the sequence is CTAEEIFRMH…LVENYSLLLT (606 aa). One can recognise an SF3 helicase domain in the interval 750–918; the sequence is VSKLEEVHQR…DNTHFTPRAY (169 aa). 780–787 lines the ATP pocket; sequence GASQSGKT. A helical transmembrane segment spans residues 1173 to 1193; the sequence is LVAILVLIATAYSLISTLIGL. The Lumenal portion of the chain corresponds to 1194 to 1216; sequence AGCSSFAGGMVALNHVSNASIPC. An O-(5'-phospho-RNA)-serine modification is found at S1217. The region spanning 1242 to 1457 is the Peptidase C3 domain; it reads GPAQGQGDHE…SVIPSYSSSF (216 aa). Active-site for picornain 3C-like protease activity residues include H1283, E1327, and C1419. The RdRp catalytic domain maps to 1727–1851; it reads DVGYNCDYKG…TVSQSIMTSF (125 aa).

The protein belongs to the nepoviruses RNA1 polyprotein family. Post-translationally, specific enzymatic cleavages by picornain 3C-like protease in vivo yield mature proteins. Picornain 3C-like protease is autocatalytically processed. In terms of processing, VPg is uridylylated by the polymerase and is covalently linked to the 5'-end of genomic RNA. This uridylylated form acts as a nucleotide-peptide primer for the polymerase.

It localises to the host endoplasmic reticulum lumen. The protein localises to the host endoplasmic reticulum membrane. The enzyme catalyses RNA(n) + a ribonucleoside 5'-triphosphate = RNA(n+1) + diphosphate. Functionally, picornain 3C-like protease is a thiol protease that cleaves the P1 and P2 polyproteins. The polypeptide is RNA1 polyprotein (Vitis vinifera (Grape)).